A 72-amino-acid chain; its full sequence is Alpha-elapitoxin-Dpp2a (72 aa).

Intrachain disulfides connect Cys-3–Cys-21, Cys-14–Cys-42, Cys-27–Cys-31, Cys-46–Cys-57, and Cys-58–Cys-63.

Belongs to the three-finger toxin family. Long-chain subfamily. Type II alpha-neurotoxin sub-subfamily. In terms of tissue distribution, expressed by the venom gland.

The protein resides in the secreted. Binds with high affinity to muscular (alpha-1/CHRNA1) and neuronal (alpha-7/CHRNA7) nicotinic acetylcholine receptor (nAChR) and inhibits acetylcholine from binding to the receptor, thereby impairing neuromuscular and neuronal transmission. The sequence is that of Alpha-elapitoxin-Dpp2a from Dendroaspis polylepis polylepis (Black mamba).